Here is a 278-residue protein sequence, read N- to C-terminus: tRNA pseudouridine synthase A (278 aa).

D61 functions as the Nucleophile in the catalytic mechanism. Y119 is a binding site for substrate.

This sequence belongs to the tRNA pseudouridine synthase TruA family. In terms of assembly, homodimer.

It carries out the reaction uridine(38/39/40) in tRNA = pseudouridine(38/39/40) in tRNA. Functionally, formation of pseudouridine at positions 38, 39 and 40 in the anticodon stem and loop of transfer RNAs. This is tRNA pseudouridine synthase A from Oleidesulfovibrio alaskensis (strain ATCC BAA-1058 / DSM 17464 / G20) (Desulfovibrio alaskensis).